The sequence spans 66 residues: MADTPSVEPTRIDPKLLELLVCPLTKGRLEYDSARQELISRSAKLAYPIRDGIPIMLPEEARPLAE.

This sequence belongs to the UPF0434 family.

This Methylobacterium sp. (strain 4-46) protein is UPF0434 protein M446_0487.